We begin with the raw amino-acid sequence, 734 residues long: Amino-acid acetyltransferase, mitochondrial (734 aa).

The disordered stretch occupies residues 384–433 (YSETSSRSTRAEADSNFNLRDDIPLSSFTEQKSGELEYSPRHQNDSPTQQ). Composition is skewed to basic and acidic residues over residues 392-406 (TRAE…RDDI) and 415-427 (KSGE…RHQN). In terms of domain architecture, N-acetyltransferase spans 555-724 (GVPQISLTDP…YEAVCKTIEP (170 aa)).

It belongs to the acetyltransferase family.

It is found in the mitochondrion. It carries out the reaction L-glutamate + acetyl-CoA = N-acetyl-L-glutamate + CoA + H(+). Its pathway is amino-acid biosynthesis; L-arginine biosynthesis; N(2)-acetyl-L-ornithine from L-glutamate: step 1/4. Functionally, N-acetylglutamate synthase involved in arginine biosynthesis. This is Amino-acid acetyltransferase, mitochondrial (arg2) from Botryotinia fuckeliana (strain B05.10) (Noble rot fungus).